Consider the following 75-residue polypeptide: Phi-liotoxin-Lw1a (75 aa).

An N-terminal signal peptide occupies residues methionine 1–glycine 25. Positions aspartate 26–arginine 39 are excised as a propeptide. Disulfide bonds link cysteine 50–cysteine 62 and cysteine 56–cysteine 68.

In terms of tissue distribution, expressed by the venom gland.

It localises to the secreted. Its function is as follows. Affects the activity of both ryanodine-sensitive calcium-release channels RyR1 and RyR2 with high potency. At lower concentrations the toxin increases full openings of the RyRs, and at higher concentrations it inhibits full openings and induce openings to subconductance levels and reduces the number of full conductance openings. The different actions may be attributed to the toxins binding at different sites on the RyRs, with binding at a high-affinity site mediating the increase in full openings and the induction of subconductance states evoked upon binding to a lower-affinity site. Insect-selective toxin that provokes a dose-dependent contractile paralysis in crickets and blowfly larvae, followed by death. The sequence is that of Phi-liotoxin-Lw1a from Hormurus waigiensis (Australian rainforest scorpion).